A 132-amino-acid chain; its full sequence is MYLENYKRFEAIIDKLREFEGAIIVEGARDEASLRKLGVRAEIIKLSRLPLPEVALIASEYDEVMILTDLDRKGEELARKLAWYLEGYGCKVDTETRRELKMIAKKDIKGIEDLYSLYLRVSLRFWPPEEGI.

The Toprim domain occupies 20–100; the sequence is EGAIIVEGAR…KVDTETRREL (81 aa). Positions 26, 69, and 71 each coordinate Mg(2+).

The protein belongs to the UPF0292 family. Mg(2+) serves as cofactor.

The polypeptide is UPF0292 protein PH1700 (Pyrococcus horikoshii (strain ATCC 700860 / DSM 12428 / JCM 9974 / NBRC 100139 / OT-3)).